Reading from the N-terminus, the 91-residue chain is Small ribosomal subunit protein uS19 (91 aa).

This sequence belongs to the universal ribosomal protein uS19 family.

In terms of biological role, protein S19 forms a complex with S13 that binds strongly to the 16S ribosomal RNA. The chain is Small ribosomal subunit protein uS19 from Pseudomonas fluorescens (strain Pf0-1).